Reading from the N-terminus, the 404-residue chain is Pyrophosphate--fructose 6-phosphate 1-phosphotransferase (404 aa).

Residue G13 coordinates diphosphate. Residue N108 participates in Mg(2+) binding. Residues 136-138, 180-182, E237, and 295-298 each bind substrate; these read TID, MGR, and YLQR. The Proton acceptor role is filled by D138.

It belongs to the phosphofructokinase type A (PFKA) family. PPi-dependent PFK group II subfamily. Clade 'B2' sub-subfamily. As to quaternary structure, homodimer. Requires Mg(2+) as cofactor.

It is found in the cytoplasm. The catalysed reaction is beta-D-fructose 6-phosphate + diphosphate = beta-D-fructose 1,6-bisphosphate + phosphate + H(+). It participates in carbohydrate degradation; glycolysis; D-glyceraldehyde 3-phosphate and glycerone phosphate from D-glucose: step 3/4. Non-allosteric. Its function is as follows. Catalyzes the phosphorylation of D-fructose 6-phosphate, the first committing step of glycolysis. Uses inorganic phosphate (PPi) as phosphoryl donor instead of ATP like common ATP-dependent phosphofructokinases (ATP-PFKs), which renders the reaction reversible, and can thus function both in glycolysis and gluconeogenesis. Consistently, PPi-PFK can replace the enzymes of both the forward (ATP-PFK) and reverse (fructose-bisphosphatase (FBPase)) reactions. This chain is Pyrophosphate--fructose 6-phosphate 1-phosphotransferase, found in Rhodospirillum rubrum (strain ATCC 11170 / ATH 1.1.1 / DSM 467 / LMG 4362 / NCIMB 8255 / S1).